The following is a 172-amino-acid chain: 3-hydroxydecanoyl-[acyl-carrier-protein] dehydratase (172 aa).

Histidine 71 is a catalytic residue.

It belongs to the thioester dehydratase family. FabA subfamily. Homodimer.

It localises to the cytoplasm. It catalyses the reaction a (3R)-hydroxyacyl-[ACP] = a (2E)-enoyl-[ACP] + H2O. The catalysed reaction is (3R)-hydroxydecanoyl-[ACP] = (2E)-decenoyl-[ACP] + H2O. The enzyme catalyses (2E)-decenoyl-[ACP] = (3Z)-decenoyl-[ACP]. The protein operates within lipid metabolism; fatty acid biosynthesis. Its function is as follows. Necessary for the introduction of cis unsaturation into fatty acids. Catalyzes the dehydration of (3R)-3-hydroxydecanoyl-ACP to E-(2)-decenoyl-ACP and then its isomerization to Z-(3)-decenoyl-ACP. Can catalyze the dehydratase reaction for beta-hydroxyacyl-ACPs with saturated chain lengths up to 16:0, being most active on intermediate chain length. This is 3-hydroxydecanoyl-[acyl-carrier-protein] dehydratase from Pectobacterium carotovorum subsp. carotovorum (strain PC1).